We begin with the raw amino-acid sequence, 300 residues long: Polyamine aminopropyltransferase (300 aa).

In terms of domain architecture, PABS spans 4–237; that stretch reads WHWHIEWQTP…GLWGFVYASD (234 aa). Gln-33 is a binding site for S-methyl-5'-thioadenosine. Residues His-64 and Glu-88 each coordinate spermidine. S-methyl-5'-thioadenosine-binding positions include Asp-108 and 140–141; that span reads DG. Asp-158 (proton acceptor) is an active-site residue. Pro-167 is an S-methyl-5'-thioadenosine binding site.

The protein belongs to the spermidine/spermine synthase family. Homodimer or homotetramer.

Its subcellular location is the cytoplasm. It carries out the reaction S-adenosyl 3-(methylsulfanyl)propylamine + putrescine = S-methyl-5'-thioadenosine + spermidine + H(+). It participates in amine and polyamine biosynthesis; spermidine biosynthesis; spermidine from putrescine: step 1/1. In terms of biological role, catalyzes the irreversible transfer of a propylamine group from the amino donor S-adenosylmethioninamine (decarboxy-AdoMet) to putrescine (1,4-diaminobutane) to yield spermidine. The protein is Polyamine aminopropyltransferase of Sulfurisphaera tokodaii (strain DSM 16993 / JCM 10545 / NBRC 100140 / 7) (Sulfolobus tokodaii).